The following is a 601-amino-acid chain: Glutathione-regulated potassium-efflux system protein KefB (601 aa).

Helical transmembrane passes span 4–24 (SDFL…VPLA), 29–49 (IGAV…GLGF), 55–75 (EILH…GLEL), 87–107 (IFGV…GLLM), 115–135 (AAVV…LQLM), 152–172 (VLLF…LLAG), 177–197 (HFDW…LIGG), 207–227 (FIAA…LVLG), 230–250 (LFMD…GVLL), 268–288 (GLLL…GVLY), 291–311 (LLWV…VLYL), 324–344 (MQFA…FSTA), and 356–376 (ALLL…MKLV). Positions 400-519 (KPQVIVVGFG…AGVTQFSRET (120 aa)) constitute an RCK N-terminal domain.

The protein belongs to the monovalent cation:proton antiporter 2 (CPA2) transporter (TC 2.A.37) family. KefB subfamily. In terms of assembly, interacts with the regulatory subunit KefG.

The protein resides in the cell inner membrane. Functionally, pore-forming subunit of a potassium efflux system that confers protection against electrophiles. Catalyzes K(+)/H(+) antiport. The sequence is that of Glutathione-regulated potassium-efflux system protein KefB from Escherichia coli (strain ATCC 8739 / DSM 1576 / NBRC 3972 / NCIMB 8545 / WDCM 00012 / Crooks).